Consider the following 459-residue polypeptide: ATP-dependent protease ATPase subunit HslU (459 aa).

ATP-binding positions include V26, 68 to 73 (GVGKTE), D271, E337, and R409.

Belongs to the ClpX chaperone family. HslU subfamily. In terms of assembly, a double ring-shaped homohexamer of HslV is capped on each side by a ring-shaped HslU homohexamer. The assembly of the HslU/HslV complex is dependent on binding of ATP.

It localises to the cytoplasm. In terms of biological role, ATPase subunit of a proteasome-like degradation complex; this subunit has chaperone activity. The binding of ATP and its subsequent hydrolysis by HslU are essential for unfolding of protein substrates subsequently hydrolyzed by HslV. HslU recognizes the N-terminal part of its protein substrates and unfolds these before they are guided to HslV for hydrolysis. This chain is ATP-dependent protease ATPase subunit HslU, found in Xylella fastidiosa (strain 9a5c).